We begin with the raw amino-acid sequence, 140 residues long: L-fucose mutarotase (140 aa).

The active-site Proton donor is the H22. Residues D30, R107, and 129 to 131 (YGN) contribute to the substrate site.

It belongs to the RbsD / FucU family. FucU mutarotase subfamily. In terms of assembly, homodecamer.

The protein resides in the cytoplasm. It catalyses the reaction alpha-L-fucose = beta-L-fucose. It participates in carbohydrate metabolism; L-fucose metabolism. Its function is as follows. Involved in the anomeric conversion of L-fucose. In Klebsiella pneumoniae (strain 342), this protein is L-fucose mutarotase.